The primary structure comprises 263 residues: MKAVVLAVAVLFLTGSQARHFWQRDDPQTSWDRVRDFATVYVDAVKESGRDYVAQLEASLGKHLNLKLLDNWDTLSTTFSKLRSELGPVTQEFWDNLEKDTEWLRQEMNKDLVEVKEKVQPYLKNFQEKVQLELEHYRKKVEPLGTDLRDGARQKLQELQEKLTPLGEDLRDRARQHVDELRAQLGPYSDQMRQRLTQRLEALKDSASLAEYQAKAQEHLKTFSEKAKPALEDLRLGLLPVLESLKASFLSSIDEVSKKLSAQ.

The N-terminal stretch at 1 to 18 is a signal peptide; the sequence is MKAVVLAVAVLFLTGSQA. 2 repeat units span residues 66-87 and 88-109. The segment at 66 to 263 is 10 X approximate tandem repeats; the sequence is LKLLDNWDTL…DEVSKKLSAQ (198 aa). At Met108 the chain carries Methionine sulfoxide. One copy of the 3; half-length repeat lies at 110–120; it reads KDLVEVKEKVQ. 5 repeat units span residues 121-142, 143-164, 165-186, 187-206, and 207-228. The stretch at 229–239 is one 9; half-length repeat; the sequence is PALEDLRLGLL. The stretch at 240–263 is repeat 10; that stretch reads PVLESLKASFLSSIDEVSKKLSAQ.

It belongs to the apolipoprotein A1/A4/E family. As to quaternary structure, homodimer. Interacts with APOA1BP and CLU. Component of a sperm activating protein complex (SPAP), consisting of APOA1, an immunoglobulin heavy chain, an immunoglobulin light chain and albumin. Interacts with NDRG1. Interacts with SCGB3A2. Interacts with NAXE and YJEFN3. Post-translationally, glycosylated. In terms of processing, palmitoylated. Phosphorylation sites are present in the extracellular medium.

Its subcellular location is the secreted. In terms of biological role, participates in the reverse transport of cholesterol from tissues to the liver for excretion by promoting cholesterol efflux from tissues and by acting as a cofactor for the lecithin cholesterol acyltransferase (LCAT). As part of the SPAP complex, activates spermatozoa motility. In Octodon degus (Degu), this protein is Apolipoprotein A-I (APOA1).